A 74-amino-acid polypeptide reads, in one-letter code: MDLSKKSAENVAYMVEKIKEKLKVLNFDAIKPSHFSEEWYDELKDIYEMVMRKNTFSPSEMQAIAEELGNLRKK.

Belongs to the UPF0435 family.

In Geobacillus sp. (strain WCH70), this protein is UPF0435 protein GWCH70_0415.